The sequence spans 426 residues: Glutamate-1-semialdehyde 2,1-aminomutase (426 aa).

K265 carries the N6-(pyridoxal phosphate)lysine modification.

Belongs to the class-III pyridoxal-phosphate-dependent aminotransferase family. HemL subfamily. As to quaternary structure, homodimer. Requires pyridoxal 5'-phosphate as cofactor.

Its subcellular location is the cytoplasm. It catalyses the reaction (S)-4-amino-5-oxopentanoate = 5-aminolevulinate. The protein operates within porphyrin-containing compound metabolism; protoporphyrin-IX biosynthesis; 5-aminolevulinate from L-glutamyl-tRNA(Glu): step 2/2. This is Glutamate-1-semialdehyde 2,1-aminomutase from Escherichia coli (strain K12 / DH10B).